Here is a 387-residue protein sequence, read N- to C-terminus: Probable serine protease FE772_23060 (387 aa).

It belongs to the peptidase S1 family.

Functionally, possibly a dedicated protease for substrate gasdermin bGSDM; cleaves the bGSDM precursor, releasing the pore-forming moiety, which integrates into the membrane and triggers cell death. Involved in defense against bacteriophages. When this probable 4 gene operon (bGSDM-FE772_23060-FE772_23065-FE772_23070) is inserted into E.coli it provides nearly 100-fold protection against phages T5 and T6 and about 8-fold against phage T4. The operon without bGSDM no longer protects against phage. This is Probable serine protease FE772_23060 from Lysobacter enzymogenes.